The following is a 216-amino-acid chain: tRNA (guanine-N(7)-)-methyltransferase (216 aa).

Residues E43, D68, N95, and N117 each coordinate S-adenosyl-L-methionine. Substrate is bound by residues D153 and 190–193 (TEYE).

It belongs to the class I-like SAM-binding methyltransferase superfamily. TrmB family.

It carries out the reaction guanosine(46) in tRNA + S-adenosyl-L-methionine = N(7)-methylguanosine(46) in tRNA + S-adenosyl-L-homocysteine. Its pathway is tRNA modification; N(7)-methylguanine-tRNA biosynthesis. Catalyzes the formation of N(7)-methylguanine at position 46 (m7G46) in tRNA. The polypeptide is tRNA (guanine-N(7)-)-methyltransferase (Desulfitobacterium hafniense (strain Y51)).